We begin with the raw amino-acid sequence, 710 residues long: Choline transporter-like protein 5 (710 aa).

The disordered stretch occupies residues 1 to 21; the sequence is MARKRKPPSSQGDPRRYDPDF. The Cytoplasmic portion of the chain corresponds to 1-32; that stretch reads MARKRKPPSSQGDPRRYDPDFQGPTAKRTCTD. The helical transmembrane segment at 33–53 threads the bilayer; the sequence is VLCCLIFLLFILGYVLLGLLA. Residues 54-236 lie on the Extracellular side of the membrane; it reads WAHGDPRKMA…KLLEDYATSW (183 aa). 2 N-linked (GlcNAc...) asparagine glycosylation sites follow: Asn-82 and Asn-184. Residues 237-257 traverse the membrane as a helical segment; that stretch reads KWILIGLTVAMALSWTFLILL. Residues 258–260 lie on the Cytoplasmic side of the membrane; it reads RFT. Residues 261–281 traverse the membrane as a helical segment; it reads AGFLFWFFIFGVLGIIGYGIW. At 282–319 the chain is on the extracellular side; it reads YCFLEYSSIQQRPQSTFWMYGFGIQRRVNMFFHLKETW. The chain crosses the membrane as a helical span at residues 320 to 340; the sequence is FSMMIILSAIEIIIIIVLIFL. At 341–345 the chain is on the cytoplasmic side; sequence RTRIQ. Residues 346–366 traverse the membrane as a helical segment; that stretch reads VAIILLQEGSKAISYLPSALI. Over 367 to 368 the chain is Extracellular; sequence YP. Residues 369 to 389 form a helical membrane-spanning segment; sequence VLTFILLSICISYWAVTAVFL. Topologically, residues 390 to 454 are cytoplasmic; the sequence is ATSGVPIFKV…NYILTFQVYN (65 aa). A helical membrane pass occupies residues 455–475; that stretch reads LFAFLWLINFVIALGQCALAG. Residues 476-509 lie on the Extracellular side of the membrane; that stretch reads AFASYYWAMKKPDDIPPYPLFTAFGRAVRYHTGS. Residues 510–530 traverse the membrane as a helical segment; sequence LAFGSLILASVQMFKVIVEYL. The Cytoplasmic portion of the chain corresponds to 531–604; that stretch reads DRRLKKAQNS…KVTVTDEVTY (74 aa). A helical membrane pass occupies residues 605–625; sequence FVLLLGKVLVSGIVGVLAFLL. Topologically, residues 626-643 are extracellular; the sequence is FTERLQIIVDGPTTLNYY. The chain crosses the membrane as a helical span at residues 644-664; sequence WVPFLTLVFGSYMIAHGFFSV. Residues 665 to 710 lie on the Cytoplasmic side of the membrane; that stretch reads YSMCVETIFICFLEDLERNEGSPSRPYFVTPALMNILLEQGKIKKQ.

Belongs to the CTL (choline transporter-like) family.

Its subcellular location is the cell membrane. It carries out the reaction choline(out) + n H(+)(in) = choline(in) + n H(+)(out). Choline/H+ antiporter. The polypeptide is Choline transporter-like protein 5 (Slc44a5) (Mus musculus (Mouse)).